Here is a 515-residue protein sequence, read N- to C-terminus: GMP synthase [glutamine-hydrolyzing] (515 aa).

Residues 6-198 (KVIIIDYGSQ…LFHVAKLKAD (193 aa)) form the Glutamine amidotransferase type-1 domain. Cys83 acts as the Nucleophile in catalysis. Active-site residues include His172 and Glu174. The 192-residue stretch at 199-390 (WTMSSFVERA…LGLPDFIIWR (192 aa)) folds into the GMPS ATP-PPase domain. 226–232 (SGGIDST) provides a ligand contact to ATP.

Homodimer.

It carries out the reaction XMP + L-glutamine + ATP + H2O = GMP + L-glutamate + AMP + diphosphate + 2 H(+). It functions in the pathway purine metabolism; GMP biosynthesis; GMP from XMP (L-Gln route): step 1/1. In terms of biological role, catalyzes the synthesis of GMP from XMP. This Nitratidesulfovibrio vulgaris (strain DP4) (Desulfovibrio vulgaris) protein is GMP synthase [glutamine-hydrolyzing].